Reading from the N-terminus, the 592-residue chain is NADH-quinone oxidoreductase subunit C/D (592 aa).

The NADH dehydrogenase I subunit C stretch occupies residues 1–183; that stretch reads MLTEFNSIPA…GPYILTEEKE (183 aa). The tract at residues 207–592 is NADH dehydrogenase I subunit D; it reads DFMFLNLGPN…IDFVMADVDR (386 aa).

The protein in the N-terminal section; belongs to the complex I 30 kDa subunit family. It in the C-terminal section; belongs to the complex I 49 kDa subunit family. NDH-1 is composed of 13 different subunits. Subunits NuoB, CD, E, F, and G constitute the peripheral sector of the complex.

It localises to the cell inner membrane. The catalysed reaction is a quinone + NADH + 5 H(+)(in) = a quinol + NAD(+) + 4 H(+)(out). NDH-1 shuttles electrons from NADH, via FMN and iron-sulfur (Fe-S) centers, to quinones in the respiratory chain. The immediate electron acceptor for the enzyme in this species is believed to be ubiquinone. Couples the redox reaction to proton translocation (for every two electrons transferred, four hydrogen ions are translocated across the cytoplasmic membrane), and thus conserves the redox energy in a proton gradient. This chain is NADH-quinone oxidoreductase subunit C/D, found in Acidiphilium cryptum (strain JF-5).